Consider the following 161-residue polypeptide: MPSFDVVCEPDMVELKNAIEQSNKEISNRFDFKGSDSRVEQKDEALILFGDDDFKLGQVRDVLVNKMAKRNVDVRYLKDDKTETIGGDKRKQTMKIQKGITSELSKKVVRIIKDSKIKVQASIQGDAVRVTGGKRDDLQETMALLKKEVTEAPLGFNNFRD.

This sequence belongs to the YajQ family.

Functionally, nucleotide-binding protein. In Polynucleobacter asymbioticus (strain DSM 18221 / CIP 109841 / QLW-P1DMWA-1) (Polynucleobacter necessarius subsp. asymbioticus), this protein is Nucleotide-binding protein Pnuc_0290.